The chain runs to 671 residues: UvrABC system protein B (671 aa).

Residues Glu26–Arg183 form the Helicase ATP-binding domain. Residue Gly39–Thr46 participates in ATP binding. A Beta-hairpin motif is present at residues Tyr92–Val115. Residues Gln431–Leu597 form the Helicase C-terminal domain. The 36-residue stretch at Asp631–Gln666 folds into the UVR domain.

Belongs to the UvrB family. In terms of assembly, forms a heterotetramer with UvrA during the search for lesions. Interacts with UvrC in an incision complex.

It localises to the cytoplasm. The UvrABC repair system catalyzes the recognition and processing of DNA lesions. A damage recognition complex composed of 2 UvrA and 2 UvrB subunits scans DNA for abnormalities. Upon binding of the UvrA(2)B(2) complex to a putative damaged site, the DNA wraps around one UvrB monomer. DNA wrap is dependent on ATP binding by UvrB and probably causes local melting of the DNA helix, facilitating insertion of UvrB beta-hairpin between the DNA strands. Then UvrB probes one DNA strand for the presence of a lesion. If a lesion is found the UvrA subunits dissociate and the UvrB-DNA preincision complex is formed. This complex is subsequently bound by UvrC and the second UvrB is released. If no lesion is found, the DNA wraps around the other UvrB subunit that will check the other stand for damage. The chain is UvrABC system protein B from Yersinia pseudotuberculosis serotype IB (strain PB1/+).